Consider the following 242-residue polypeptide: Small ribosomal subunit protein uS2 (242 aa).

The protein belongs to the universal ribosomal protein uS2 family.

The polypeptide is Small ribosomal subunit protein uS2 (Colwellia psychrerythraea (strain 34H / ATCC BAA-681) (Vibrio psychroerythus)).